The primary structure comprises 303 residues: ATP synthase subunit a (303 aa).

6 helical membrane-spanning segments follow: residues 59–79 (HTVM…IWGN), 122–142 (FLLT…VPWM), 148–168 (NLAV…VAGI), 181–201 (TGGV…LGLF), 220–240 (IVYF…VAAV), and 244–264 (FAFA…YVFA). Residues 281 to 290 (HDDHGHDHPE) show a composition bias toward basic and acidic residues. A disordered region spans residues 281 to 303 (HDDHGHDHPEAGPSHDQGKAHHA).

Belongs to the ATPase A chain family. F-type ATPases have 2 components, CF(1) - the catalytic core - and CF(0) - the membrane proton channel. CF(1) has five subunits: alpha(3), beta(3), gamma(1), delta(1), epsilon(1). CF(0) has three main subunits: a(1), b(2) and c(9-12). The alpha and beta chains form an alternating ring which encloses part of the gamma chain. CF(1) is attached to CF(0) by a central stalk formed by the gamma and epsilon chains, while a peripheral stalk is formed by the delta and b chains.

It is found in the cell inner membrane. Its function is as follows. Key component of the proton channel; it plays a direct role in the translocation of protons across the membrane. This chain is ATP synthase subunit a, found in Myxococcus xanthus (strain DK1622).